A 95-amino-acid chain; its full sequence is UPF0473 protein GWCH70_2487 (95 aa).

It belongs to the UPF0473 family.

The chain is UPF0473 protein GWCH70_2487 from Geobacillus sp. (strain WCH70).